The following is a 422-amino-acid chain: Replication factor C large subunit (422 aa).

63-70 (GPPGVGKT) is a binding site for ATP.

It belongs to the activator 1 small subunits family. RfcL subfamily. As to quaternary structure, heteromultimer composed of small subunits (RfcS) and large subunits (RfcL).

Its function is as follows. Part of the RFC clamp loader complex which loads the PCNA sliding clamp onto DNA. This is Replication factor C large subunit from Pyrobaculum arsenaticum (strain DSM 13514 / JCM 11321 / PZ6).